The sequence spans 211 residues: Cytochrome c biogenesis ATP-binding export protein CcmA (211 aa).

The ABC transporter domain maps to 6–211; the sequence is LQTVALACER…RDIDLGNWAV (206 aa). 38–45 is a binding site for ATP; that stretch reads GPNGSGKT.

Belongs to the ABC transporter superfamily. CcmA exporter (TC 3.A.1.107) family. As to quaternary structure, the complex is composed of two ATP-binding proteins (CcmA) and two transmembrane proteins (CcmB).

It is found in the cell inner membrane. It catalyses the reaction heme b(in) + ATP + H2O = heme b(out) + ADP + phosphate + H(+). In terms of biological role, part of the ABC transporter complex CcmAB involved in the biogenesis of c-type cytochromes; once thought to export heme, this seems not to be the case, but its exact role is uncertain. Responsible for energy coupling to the transport system. The sequence is that of Cytochrome c biogenesis ATP-binding export protein CcmA from Pseudomonas fluorescens (strain Pf0-1).